A 96-amino-acid polypeptide reads, in one-letter code: Exodeoxyribonuclease 7 small subunit (96 aa).

The segment at 73-96 (RAPEQSAANDVSAPGSAEEHDHGR) is disordered.

This sequence belongs to the XseB family. As to quaternary structure, heterooligomer composed of large and small subunits.

It localises to the cytoplasm. The enzyme catalyses Exonucleolytic cleavage in either 5'- to 3'- or 3'- to 5'-direction to yield nucleoside 5'-phosphates.. Bidirectionally degrades single-stranded DNA into large acid-insoluble oligonucleotides, which are then degraded further into small acid-soluble oligonucleotides. This chain is Exodeoxyribonuclease 7 small subunit, found in Acidothermus cellulolyticus (strain ATCC 43068 / DSM 8971 / 11B).